A 78-amino-acid chain; its full sequence is Large ribosomal subunit protein bL28 (78 aa).

The protein belongs to the bacterial ribosomal protein bL28 family.

The protein is Large ribosomal subunit protein bL28 of Prochlorococcus marinus (strain SARG / CCMP1375 / SS120).